Here is a 201-residue protein sequence, read N- to C-terminus: 7-methyl-GTP pyrophosphatase (201 aa).

The active-site Proton acceptor is the Asp-73.

It belongs to the Maf family. YceF subfamily. It depends on a divalent metal cation as a cofactor.

It localises to the cytoplasm. It catalyses the reaction N(7)-methyl-GTP + H2O = N(7)-methyl-GMP + diphosphate + H(+). Its function is as follows. Nucleoside triphosphate pyrophosphatase that hydrolyzes 7-methyl-GTP (m(7)GTP). May have a dual role in cell division arrest and in preventing the incorporation of modified nucleotides into cellular nucleic acids. This chain is 7-methyl-GTP pyrophosphatase, found in Thiobacillus denitrificans (strain ATCC 25259 / T1).